An 847-amino-acid polypeptide reads, in one-letter code: Matrin-3 (847 aa).

Ser-2 carries the N-acetylserine modification. Lys-3 is subject to N6-acetyllysine; alternate. Lys-3 participates in a covalent cross-link: Glycyl lysine isopeptide (Lys-Gly) (interchain with G-Cter in SUMO2); alternate. 8 positions are modified to phosphoserine: Ser-4, Ser-9, Ser-11, Ser-14, Ser-22, Ser-41, Ser-118, and Ser-126. Residues Lys-132 and Lys-146 each participate in a glycyl lysine isopeptide (Lys-Gly) (interchain with G-Cter in SUMO2) cross-link. Disordered stretches follow at residues 146-174 (KRRR…YRVP) and 187-214 (DSFD…SGYY). Phosphothreonine is present on Thr-150. Ser-157 carries the phosphoserine modification. Position 158 is a phosphotyrosine (Tyr-158). A compositionally biased stretch (basic and acidic residues) spans 160–174 (RDGRSATREPPYRVP). Phosphoserine is present on residues Ser-164, Ser-188, and Ser-195. Positions 201 to 214 (DYDHGSRSQESGYY) are enriched in basic and acidic residues. A Phosphotyrosine modification is found at Tyr-202. Ser-206, Ser-208, and Ser-211 each carry phosphoserine. The residue at position 219 (Tyr-219) is a Phosphotyrosine. At Ser-234 the chain carries Phosphoserine. A Glycyl lysine isopeptide (Lys-Gly) (interchain with G-Cter in SUMO2) cross-link involves residue Lys-245. Ser-264 is modified (phosphoserine). Residue Lys-269 forms a Glycyl lysine isopeptide (Lys-Gly) (interchain with G-Cter in SUMO2) linkage. Phosphoserine is present on Ser-275. Residues 342 to 394 (PFMLQQSTNPAPGILGPPPPSFHLGGPAVGPRGNLGAGNGNLQGPRHMQKGRV) form a disordered region. Residues 398–473 (RVVHIMDFQR…KPVRVHLSQK (76 aa)) enclose the RRM 1 domain. Residues Lys-478, Lys-487, and Lys-491 each participate in a glycyl lysine isopeptide (Lys-Gly) (interchain with G-Cter in SUMO2) cross-link. Positions 496–571 (RVIHLSNLPH…RCVKVDLSEK (76 aa)) constitute an RRM 2 domain. 2 positions are modified to phosphoserine: Ser-509 and Ser-511. Lys-515 participates in a covalent cross-link: Glycyl lysine isopeptide (Lys-Gly) (interchain with G-Cter in SUMO2). Lys-522 bears the N6-acetyllysine; alternate mark. A Glycyl lysine isopeptide (Lys-Gly) (interchain with G-Cter in SUMO2); alternate cross-link involves residue Lys-522. Ser-533 is modified (phosphoserine). Residues Lys-554 and Lys-555 each participate in a glycyl lysine isopeptide (Lys-Gly) (interchain with G-Cter in SUMO2) cross-link. At Lys-571 the chain carries N6-acetyllysine. A disordered region spans residues 588 to 786 (KKDKSRKRSY…DEYRIGPYQP (199 aa)). Ser-596, Ser-598, Ser-604, and Ser-606 each carry phosphoserine. The segment covering 600 to 643 (DGKESPSDKKSKTDGSQKTESSTEGKEQEEKSGEDGEKDTKDDQ) has biased composition (basic and acidic residues). Residues Lys-617 and Lys-630 each participate in a glycyl lysine isopeptide (Lys-Gly) (interchain with G-Cter in SUMO2) cross-link. Positions 653–665 (ESEDELLVDEEEA) are enriched in acidic residues. Ser-654, Ser-671, Ser-673, and Ser-674 each carry phosphoserine. Residues 666 to 676 (AALLESGSSVG) show a composition bias toward low complexity. Thr-679 bears the Phosphothreonine mark. At Ser-689 the chain carries Phosphoserine. Residues 689-704 (SDGKKEPSDKAVKKDG) are compositionally biased toward basic and acidic residues. A Nuclear localization signal motif is present at residues 710 to 718 (AKKKLKKVD). Residues Lys-719 and Lys-736 each participate in a glycyl lysine isopeptide (Lys-Gly) (interchain with G-Cter in SUMO2) cross-link. Thr-741 is subject to Phosphothreonine. Ser-747, Ser-759, and Ser-766 each carry phosphoserine. The segment covering 767–780 (DENKDDYTIPDEYR) has biased composition (basic and acidic residues). Lys-770 participates in a covalent cross-link: Glycyl lysine isopeptide (Lys-Gly) (interchain with G-Cter in SUMO2). A Matrin-type zinc finger spans residues 801–832 (FYCKLCSLFYTNEEVAKNTHCSSLPHYQKLKK). Lys-836 is modified (N6-acetyllysine; alternate). Lys-836 is covalently cross-linked (Glycyl lysine isopeptide (Lys-Gly) (interchain with G-Cter in SUMO2); alternate).

Part of a complex consisting of SFPQ, NONO and MATR3. Interacts with AGO1 and AGO2. Part of a complex composed at least of ASH2L, EMSY, HCFC1, HSPA8, CCAR2, MATR3, MKI67, RBBP5, TUBB2A, WDR5 and ZNF335; this complex may have a histone H3-specific methyltransferase activity. Interacts with TARDBP. Part of the HDP-RNP complex composed of at least HEXIM1, PRKDC, XRCC5, XRCC6, paraspeckle proteins (SFPQ, NONO, PSPC1, RBM14, and MATR3) and NEAT1 RNA. Interacts with FUS. Interacts with IGF2BP1; the interaction is enhanced by SEPIN14P20 peptide RBPR. Interacts with IGF2BP2 and IGF2BP3. Interacts with RBPMS.

The protein localises to the nucleus matrix. In terms of biological role, may play a role in transcription or may interact with other nuclear matrix proteins to form the internal fibrogranular network. In association with the SFPQ-NONO heteromer may play a role in nuclear retention of defective RNAs. Plays a role in the regulation of DNA virus-mediated innate immune response by assembling into the HDP-RNP complex, a complex that serves as a platform for IRF3 phosphorylation and subsequent innate immune response activation through the cGAS-STING pathway. Binds to N6-methyladenosine (m6A)-containing mRNAs and contributes to MYC stability by binding to m6A-containing MYC mRNAs. May bind to specific miRNA hairpins. In Homo sapiens (Human), this protein is Matrin-3 (MATR3).